The chain runs to 664 residues: MKRRNADCSKLRRPLKRNRITEGIYGSTFLYLKFLVVWALVLLADFVLEFRFEYLWPFWLFIRSVYDSFRYQGLAFSVFFVCVAFTSNIICLLFIPIQWLFFAASTYVWVQYVWHTERGVCLPTVSLWILFVYIEAAIRFKDLKNFHVDLCRPFAAHCIGYPVVTLGFGFKSYVSYKMRLRKQKEVQKENEFYMQLLQQALPPEQQMLQKQEKEAEEAAKGLPDMDSSILIHHNGGIPANKKLSTTLPEIEYREKGKEKDKDAKKHNLGINNNNILQPVDSKIQEIEYMENHINSKRLNNDLVGSTENLLKEDSCTASSKNYKNASGVVNSSPRSHSATNGSIPSSSSKNEKKQKCTSKSPSTHKDLMENCIPNNQLSKPDALVRLEQDIKKLKADLQASRQVEQELRSQISSLSSTERGIRSEMGQLRQENELLQNKLHNAVQMKQKDKHNISQLEKKLKAEQEARSFVEKQLMEEKKRKKLEEATAARAVAFAAASRGECTETLRNRIRELEAEGKKLTMDMKVKEDQIRELELKVQELRKYKENEKDTEVLMSALSAMQDKTQHLENSLSAETRIKLDLFSALGDAKRQLEIAQGQILQKDQEIKELKQKIAEVMAVMPSITYSAATSPLSPVSPHYSSKFVETSPSGLDPNASVYQPLKK.

4 consecutive transmembrane segments (helical) span residues 28-48 (TFLY…DFVL), 75-95 (AFSV…LLFI), 120-140 (VCLP…AIRF), and 154-174 (FAAH…KSYV). Positions 253 to 265 (REKGKEKDKDAKK) are enriched in basic and acidic residues. The segment at 253 to 274 (REKGKEKDKDAKKHNLGINNNN) is disordered. The residue at position 305 (serine 305) is a Phosphoserine. The span at 320–348 (KNYKNASGVVNSSPRSHSATNGSIPSSSS) shows a compositional bias: polar residues. Residues 320–375 (KNYKNASGVVNSSPRSHSATNGSIPSSSSKNEKKQKCTSKSPSTHKDLMENCIPNN) are disordered. N-linked (GlcNAc...) asparagine glycosylation occurs at asparagine 324. Serine 332 carries the phosphoserine modification. Residues asparagine 340 and asparagine 452 are each glycosylated (N-linked (GlcNAc...) asparagine). Residues 630 to 664 (TSPLSPVSPHYSSKFVETSPSGLDPNASVYQPLKK) form a disordered region. Phosphoserine occurs at positions 631 and 634. Asparagine 655 carries an N-linked (GlcNAc...) asparagine glycan.

This sequence belongs to the macoilin family.

Its subcellular location is the rough endoplasmic reticulum membrane. It localises to the nucleus membrane. In terms of biological role, plays a role in the regulation of neuronal activity. The polypeptide is Macoilin (MACO1) (Macaca mulatta (Rhesus macaque)).